The primary structure comprises 229 residues: Putative N-acetylmannosamine-6-phosphate 2-epimerase (229 aa).

The protein belongs to the NanE family.

It catalyses the reaction an N-acyl-D-glucosamine 6-phosphate = an N-acyl-D-mannosamine 6-phosphate. The protein operates within amino-sugar metabolism; N-acetylneuraminate degradation; D-fructose 6-phosphate from N-acetylneuraminate: step 3/5. In terms of biological role, converts N-acetylmannosamine-6-phosphate (ManNAc-6-P) to N-acetylglucosamine-6-phosphate (GlcNAc-6-P). The sequence is that of Putative N-acetylmannosamine-6-phosphate 2-epimerase from Actinobacillus pleuropneumoniae serotype 3 (strain JL03).